Consider the following 223-residue polypeptide: Ubiquitin carboxyl-terminal hydrolase isozyme L1 (223 aa).

M1 bears the N-acetylmethionine mark. The region spanning 2 to 221 is the UCH catalytic domain; it reads QLKPMEINPE…VRFSAVALCK (220 aa). Residues 5-10 form an interaction with ubiquitin region; it reads PMEINP. The active-site Nucleophile is the C90. S125 carries the post-translational modification Phosphoserine. Residue H161 is the Proton donor of the active site. The segment at 211-216 is interaction with ubiquitin; sequence EVRFSA. C220 carries S-farnesyl cysteine lipidation. Residues 221–223 constitute a propeptide, removed in mature form; the sequence is KAA.

The protein belongs to the peptidase C12 family. As to quaternary structure, monomer. Homodimer. Interacts with SNCA. Interacts with COPS5. In terms of processing, O-glycosylated. Found in neuronal cell bodies and processes throughout the neocortex (at protein level). Expressed in neurons and cells of the diffuse neuroendocrine system and their tumors. Weakly expressed in ovary. Down-regulated in brains from Parkinson disease and Alzheimer disease patients.

It localises to the cytoplasm. The protein resides in the endoplasmic reticulum membrane. The catalysed reaction is Thiol-dependent hydrolysis of ester, thioester, amide, peptide and isopeptide bonds formed by the C-terminal Gly of ubiquitin (a 76-residue protein attached to proteins as an intracellular targeting signal).. Functionally, deubiquitinase that plays a role in the regulation of several processes such as maintenance of synaptic function, cardiac function, inflammatory response or osteoclastogenesis. Abrogates the ubiquitination of multiple proteins including WWTR1/TAZ, EGFR, HIF1A and beta-site amyloid precursor protein cleaving enzyme 1/BACE1. In addition, recognizes and hydrolyzes a peptide bond at the C-terminal glycine of ubiquitin to maintain a stable pool of monoubiquitin that is a key requirement for the ubiquitin-proteasome and the autophagy-lysosome pathways. Regulates amyloid precursor protein/APP processing by promoting BACE1 degradation resulting in decreased amyloid beta production. Plays a role in the immune response by regulating the ability of MHC I molecules to reach cross-presentation compartments competent for generating Ag-MHC I complexes. Mediates the 'Lys-48'-linked deubiquitination of the transcriptional coactivator WWTR1/TAZ leading to its stabilization and inhibition of osteoclastogenesis. Deubiquitinates and stabilizes epidermal growth factor receptor EGFR to prevent its degradation and to activate its downstream mediators. Modulates oxidative activity in skeletal muscle by regulating key mitochondrial oxidative proteins. Enhances the activity of hypoxia-inducible factor 1-alpha/HIF1A by abrogateing its VHL E3 ligase-mediated ubiquitination and consequently inhibiting its degradation. This Homo sapiens (Human) protein is Ubiquitin carboxyl-terminal hydrolase isozyme L1 (UCHL1).